We begin with the raw amino-acid sequence, 582 residues long: Guanine nucleotide-binding protein-like NSN1 (582 aa).

Over residues 1-46 (MVKRSKKSKSKRVTLKQKHKVLKKVKEHHKKKAKDAKKLGLHRKPR) the composition is skewed to basic residues. Positions 1–58 (MVKRSKKSKSKRVTLKQKHKVLKKVKEHHKKKAKDAKKLGLHRKPRVEKDPGIPNDWP) are disordered. The interval 2-49 (VKRSKKSKSKRVTLKQKHKVLKKVKEHHKKKAKDAKKLGLHRKPRVEK) is basic. 3 consecutive short sequence motifs (nuclear localization signal) follow at residues 5–12 (SKKSKSKR), 22–29 (LKKVKEHH), and 69–76 (VRRARALE). A coiled-coil region spans residues 15–94 (LKQKHKVLKK…RKERAKKRKL (80 aa)). Residues 127-311 (YKELVKVIEL…LLDCPGVVML (185 aa)) enclose the CP-type G domain. The DARXP motif signature appears at 145 to 149 (DARDP). The tract at residues 175–178 (NKID) is G4. GTP is bound at residue 175-178 (NKID). The interval 202 to 204 (KCS) is G5. The tract at residues 260–267 (GLPNVGKS) is G1. GTP is bound at residue 263–268 (NVGKSS). The segment at 281-456 (VGATPGLTRS…NEFNPVIIPS (176 aa)) is intermediate. Residues 286–290 (GLTRS) are G2. GTP is bound by residues 304 to 307 (DCPG) and Gly307. The G3 stretch occupies residues 304–307 (DCPG). The segment at 463-551 (DETMIEDESK…EEDLMDGDYD (89 aa)) is acidic. Positions 469–545 (DESKTQTEEE…KKAGADEEDL (77 aa)) are disordered. Over residues 476–496 (EEEAEHESDDDESMGGEEEEE) the composition is skewed to acidic residues. Over residues 497–506 (AGKTKEKSET) the composition is skewed to basic and acidic residues. Residues 515 to 537 (AAESMLNTKKQKAEKKKRKKAKK) adopt a coiled-coil conformation. Residues 522–529 (TKKQKAEK) carry the Nuclear localization signal 4 motif. The segment covering 523–537 (KKQKAEKKKRKKAKK) has biased composition (basic residues).

This sequence belongs to the TRAFAC class YlqF/YawG GTPase family. Interacts with EBP2 and PES. As to expression, mostly expressed in flowers, siliques and inflorescence apex, and, to a lower extent, in stems and leaves.

It is found in the nucleus. Its subcellular location is the nucleolus. Functionally, involved in the differentiation of epidermal cells, probably via the regulation of the expression of meristem-related genes (e.g. CLV3, STM, KNAT1, CUC2 and AG) and of leaf polarity-related genes (e.g. YAB5, FIL, AS2, PHB and PHV). May play a role in regulating cellular proliferation. Necessary for flower development, probably by preventing apical dominance through the down-regulation of AG expression. Required for embryogenesis, leaf and cotyledon development, as well as for leaf polarity establishment. Plays an important role in plant growth and senescence by modulating ribosome biogenesis in nucleolus. Possesses GTPAse activity in vitro. Possesses RNA binding activity in vitro. Associates with ribosomes. The sequence is that of Guanine nucleotide-binding protein-like NSN1 from Arabidopsis thaliana (Mouse-ear cress).